Consider the following 314-residue polypeptide: MNKTKPPVIVLIGPTAVGKTKLSVMLAERLNAEIISGDSMQIYKRMDIGTAKIREEEMNGVPHHLIDIKEPTESFSVAEYQEIVRQKIAEIDRRGKLPMIVGGTGLYIQSVLYDYSFTEEAGDPEFRAEMEAFSAKRGAEYVHDLLKERDPEAARAIHPNNKRRVIRALEILHTTGKTMSEHMEGQRKELLYTTALIGLTMEREVLYDRINSRVDQMMDEGLLDEVKLLYDENVRNCQSVQAIGYKELYAHLEGRASLEEAVETLKRNSRRYAKRQLTWFRNQMDVAWFDMTPPVNIEQKKQEIFTYIAGKLEL.

13 to 20 (GPTAVGKT) lines the ATP pocket. Residue 15–20 (TAVGKT) participates in substrate binding. Residues 38–41 (DSMQ) are interaction with substrate tRNA.

The protein belongs to the IPP transferase family. As to quaternary structure, monomer. Requires Mg(2+) as cofactor.

The enzyme catalyses adenosine(37) in tRNA + dimethylallyl diphosphate = N(6)-dimethylallyladenosine(37) in tRNA + diphosphate. Catalyzes the transfer of a dimethylallyl group onto the adenine at position 37 in tRNAs that read codons beginning with uridine, leading to the formation of N6-(dimethylallyl)adenosine (i(6)A). The sequence is that of tRNA dimethylallyltransferase from Bacillus licheniformis (strain ATCC 14580 / DSM 13 / JCM 2505 / CCUG 7422 / NBRC 12200 / NCIMB 9375 / NCTC 10341 / NRRL NRS-1264 / Gibson 46).